Reading from the N-terminus, the 62-residue chain is Protein sigN176 (62 aa).

The protein is Protein sigN176 of Dictyostelium discoideum (Social amoeba).